The sequence spans 262 residues: MKPIFLVLLVATSAYAAPSVTINQYSDNEIPRDIDDGKASSVISRAWDYVDDTDKSIAILNVQEILKDMASQGDYASQASAVAQTAGIIAHLSAGIPGDACAAANVINSYTDGVRSGNFAGFRQSLGPFFGHVGQNLNLINQLVINPGQLRYSVGPALGCAGGGRIYDFEAAWDAILASSDSSFLNEEYCIVKRLYNSRNSQSNNIAAYITAHLLPPVAQVFHQSAGSITDLLRGVGNGNDATGLVANAQRYIAQAASQVHV.

An N-terminal signal peptide occupies residues 1-16 (MKPIFLVLLVATSAYA). S19 bears the N-acetylserine; in short form mark. A disulfide bridge links C101 with C160.

In terms of assembly, silk fibroin elementary unit consists in a disulfide-linked heavy and light chain and a p25 glycoprotein in molar ratios of 6:6:1. This results in a complex of approximately 2.3 MDa. The interchain disulfide bridge is essential for the intracellular transport and secretion of fibroin. Post-translationally, partially N-terminally processed to yield a short form which lacks the first two residues of the long form. In terms of tissue distribution, produced exclusively in the posterior (PSG) section of silk glands, which are essentially modified salivary glands.

It is found in the secreted. In terms of biological role, it is likely that the major role of L-chain is to prevent the retention of H-chain in ER by forming the disulfide linkage. The chain is Fibroin light chain (FIBL) from Bombyx mori (Silk moth).